The chain runs to 161 residues: Ribonuclease H (161 aa).

In terms of domain architecture, RNase H type-1 spans 3-144 (VLKQLSIFTD…CDTLARVAAE (142 aa)). The Mg(2+) site is built by Asp12, Glu50, Asp72, and Asp136.

Belongs to the RNase H family. As to quaternary structure, monomer. Mg(2+) serves as cofactor.

The protein resides in the cytoplasm. It catalyses the reaction Endonucleolytic cleavage to 5'-phosphomonoester.. Functionally, endonuclease that specifically degrades the RNA of RNA-DNA hybrids. The sequence is that of Ribonuclease H from Shewanella woodyi (strain ATCC 51908 / MS32).